The following is a 145-amino-acid chain: MPPEPVWHISAVTEKFPTHGAILYISLTFSFYKKMLRVLWHILLVYGKHAGKRKYRKVMTETNDSLYMKRNNCSGEYATLALSTRSCSFNMQQNDWVTMEGLFPFVMVLCHLETKPMKIGIQLILQVPFMGLGIHKENKEFYLIL.

This is an uncharacterized protein from Saccharomyces cerevisiae (strain ATCC 204508 / S288c) (Baker's yeast).